The chain runs to 316 residues: Small ribosomal subunit biogenesis GTPase RsgA (316 aa).

Residues 1–20 (MSKLSHQQQRRIHNHRQNKL) are disordered. Residues 8-18 (QQRRIHNHRQN) show a composition bias toward basic residues. Residues 92–251 (AGKLKPVASN…IIDTPGVRGF (160 aa)) form the CP-type G domain. GTP is bound by residues 139–142 (NKSD) and 193–201 (GQSGVGKSS). Positions 275, 280, 282, and 288 each coordinate Zn(2+).

Belongs to the TRAFAC class YlqF/YawG GTPase family. RsgA subfamily. As to quaternary structure, monomer. Associates with 30S ribosomal subunit, binds 16S rRNA. Zn(2+) serves as cofactor.

It is found in the cytoplasm. Functionally, one of several proteins that assist in the late maturation steps of the functional core of the 30S ribosomal subunit. Helps release RbfA from mature subunits. May play a role in the assembly of ribosomal proteins into the subunit. Circularly permuted GTPase that catalyzes slow GTP hydrolysis, GTPase activity is stimulated by the 30S ribosomal subunit. The protein is Small ribosomal subunit biogenesis GTPase RsgA of Dichelobacter nodosus (strain VCS1703A).